The primary structure comprises 442 residues: MAKKLYIETHGCQMNEYDSSRMVDLLGEHQALEVTARAEDADVILLNTCSIRERAQDRVYSQLGRWRELKLANPDMVIAVGGCVASQEGAAIRDRAPYVDVVFGPQTLHRLPEMIDAARISKLPQVDVSFPEIEKFDHLPEPRIDGPSAYVSVMEGCSKYCTFCVVPYTRGEEVSRPFDDVIAEIIHLAENGVREVTLLGQNVNGYRGLTHDGRLADLAELIRVVAAVDGIDRIRYTTSHPLEFSDSLIQAHAEVPELVKHLHLPVQSGSDRILAAMKRNHTALEYKSKLRKLRAAVPGICISSDFIVGFPGETEKDFEQTMKLIADVGFDFSYSFVYSQRPGTPAADLADDTPEELKKERLNALQHRLNQQGFEISRQMVGSVQRILVTDYSKKDPGELQGRTENNRIVNFRCDNPTLIGQFADVHIDAAQPHSLRGSLIQ.

Positions 3–120 (KKLYIETHGC…LPEMIDAARI (118 aa)) constitute an MTTase N-terminal domain. Residues C12, C49, C83, C157, C161, and C164 each coordinate [4Fe-4S] cluster. The 233-residue stretch at 143–375 (RIDGPSAYVS…QHRLNQQGFE (233 aa)) folds into the Radical SAM core domain. The region spanning 378–442 (RQMVGSVQRI…PHSLRGSLIQ (65 aa)) is the TRAM domain.

Belongs to the methylthiotransferase family. MiaB subfamily. Monomer. It depends on [4Fe-4S] cluster as a cofactor.

The protein resides in the cytoplasm. The enzyme catalyses N(6)-dimethylallyladenosine(37) in tRNA + (sulfur carrier)-SH + AH2 + 2 S-adenosyl-L-methionine = 2-methylsulfanyl-N(6)-dimethylallyladenosine(37) in tRNA + (sulfur carrier)-H + 5'-deoxyadenosine + L-methionine + A + S-adenosyl-L-homocysteine + 2 H(+). Catalyzes the methylthiolation of N6-(dimethylallyl)adenosine (i(6)A), leading to the formation of 2-methylthio-N6-(dimethylallyl)adenosine (ms(2)i(6)A) at position 37 in tRNAs that read codons beginning with uridine. This Pseudomonas fluorescens (strain Pf0-1) protein is tRNA-2-methylthio-N(6)-dimethylallyladenosine synthase.